The sequence spans 479 residues: UDP-N-acetylmuramate--L-alanine ligase (479 aa).

114 to 120 (GTHGKTT) is a binding site for ATP.

It belongs to the MurCDEF family.

The protein localises to the cytoplasm. It catalyses the reaction UDP-N-acetyl-alpha-D-muramate + L-alanine + ATP = UDP-N-acetyl-alpha-D-muramoyl-L-alanine + ADP + phosphate + H(+). It functions in the pathway cell wall biogenesis; peptidoglycan biosynthesis. In terms of biological role, cell wall formation. The chain is UDP-N-acetylmuramate--L-alanine ligase from Pelodictyon phaeoclathratiforme (strain DSM 5477 / BU-1).